Reading from the N-terminus, the 198-residue chain is Na(+)-translocating NADH-quinone reductase subunit E (198 aa).

Helical transmembrane passes span 11–31, 35–55, 77–97, 109–129, 140–160, and 176–196; these read AVFV…FLAV, VSTA…SVPA, FLNF…LEMI, LGIF…VSFM, IVYG…LAGI, and LGIT…FAGV.

Belongs to the NqrDE/RnfAE family. As to quaternary structure, composed of six subunits; NqrA, NqrB, NqrC, NqrD, NqrE and NqrF.

The protein localises to the cell inner membrane. The catalysed reaction is a ubiquinone + n Na(+)(in) + NADH + H(+) = a ubiquinol + n Na(+)(out) + NAD(+). Functionally, NQR complex catalyzes the reduction of ubiquinone-1 to ubiquinol by two successive reactions, coupled with the transport of Na(+) ions from the cytoplasm to the periplasm. NqrA to NqrE are probably involved in the second step, the conversion of ubisemiquinone to ubiquinol. The polypeptide is Na(+)-translocating NADH-quinone reductase subunit E (Yersinia pestis bv. Antiqua (strain Nepal516)).